The following is a 229-amino-acid chain: Enolase-phosphatase E1 (229 aa).

The tract at residues 207 to 229 (RDPASHHPQVQRFDDIHPEQIPA) is disordered. The span at 218 to 229 (RFDDIHPEQIPA) shows a compositional bias: basic and acidic residues.

Belongs to the HAD-like hydrolase superfamily. MasA/MtnC family. In terms of assembly, monomer. Mg(2+) is required as a cofactor.

The catalysed reaction is 5-methylsulfanyl-2,3-dioxopentyl phosphate + H2O = 1,2-dihydroxy-5-(methylsulfanyl)pent-1-en-3-one + phosphate. The protein operates within amino-acid biosynthesis; L-methionine biosynthesis via salvage pathway; L-methionine from S-methyl-5-thio-alpha-D-ribose 1-phosphate: step 3/6. It functions in the pathway amino-acid biosynthesis; L-methionine biosynthesis via salvage pathway; L-methionine from S-methyl-5-thio-alpha-D-ribose 1-phosphate: step 4/6. Functionally, bifunctional enzyme that catalyzes the enolization of 2,3-diketo-5-methylthiopentyl-1-phosphate (DK-MTP-1-P) into the intermediate 2-hydroxy-3-keto-5-methylthiopentenyl-1-phosphate (HK-MTPenyl-1-P), which is then dephosphorylated to form the acireductone 1,2-dihydroxy-3-keto-5-methylthiopentene (DHK-MTPene). This Klebsiella pneumoniae subsp. pneumoniae (strain ATCC 700721 / MGH 78578) protein is Enolase-phosphatase E1.